A 447-amino-acid polypeptide reads, in one-letter code: N-succinylarginine dihydrolase (447 aa).

Substrate-binding positions include 19–28 (AGLSFGNEAS), asparagine 110, and 137–138 (HR). Glutamate 174 is a catalytic residue. Residue arginine 212 participates in substrate binding. Residue histidine 248 is part of the active site. The substrate site is built by aspartate 250 and asparagine 359. The Nucleophile role is filled by cysteine 365.

This sequence belongs to the succinylarginine dihydrolase family. In terms of assembly, homodimer.

It catalyses the reaction N(2)-succinyl-L-arginine + 2 H2O + 2 H(+) = N(2)-succinyl-L-ornithine + 2 NH4(+) + CO2. It participates in amino-acid degradation; L-arginine degradation via AST pathway; L-glutamate and succinate from L-arginine: step 2/5. Functionally, catalyzes the hydrolysis of N(2)-succinylarginine into N(2)-succinylornithine, ammonia and CO(2). The protein is N-succinylarginine dihydrolase of Salmonella schwarzengrund (strain CVM19633).